We begin with the raw amino-acid sequence, 302 residues long: uncharacterized protein (302 aa).

Residue Glu48 is part of the active site.

The protein belongs to the PhzF family.

This is an uncharacterized protein from Clostridium acetobutylicum (strain ATCC 824 / DSM 792 / JCM 1419 / IAM 19013 / LMG 5710 / NBRC 13948 / NRRL B-527 / VKM B-1787 / 2291 / W).